A 221-amino-acid polypeptide reads, in one-letter code: uncharacterized protein (221 aa).

A signal peptide spans 1–23 (MNKLIQLALFFTLMLTGCSNSST). A disordered region spans residues 67–221 (ELGKRKAKEE…QGYIDPEDAP (155 aa)). Basic and acidic residues predominate over residues 68–150 (LGKRKAKEEA…EQKANAEKKR (83 aa)). The stretch at 70–161 (KRKAKEEAEK…SQAQRQQTEA (92 aa)) forms a coiled coil. Residues 152–161 (SQAQRQQTEA) are compositionally biased toward polar residues. Residues 162–174 (PSSNSQDPPSSSS) are compositionally biased toward low complexity. Residues 175 to 184 (QTDKTIQQPA) show a composition bias toward polar residues. The span at 195–205 (YEERKKWHDDQ) shows a compositional bias: basic and acidic residues.

This is an uncharacterized protein from Bacillus subtilis (strain 168).